We begin with the raw amino-acid sequence, 563 residues long: Merozoite receptor PK66 (563 aa).

The N-terminal stretch at 1–13 (MNKIYYILFLSAQ) is a signal peptide. The Extracellular segment spans residues 14-487 (CLVHMGKCER…DGKHKKKMLL (474 aa)). Asparagine 36, asparagine 107, asparagine 176, asparagine 189, asparagine 238, and asparagine 441 each carry an N-linked (GlcNAc...) asparagine glycan. Residues 488-508 (IIIGVTGAVCVVAVASLFYFR) traverse the membrane as a helical segment. Residues 509 to 563 (KKAQDDKYDKMDQAEAYGKTANTRKDEMLDPEASFWGEDKRASHTTPVLMEKPYY) are Cytoplasmic-facing.

The protein belongs to the apicomplexan parasites AMA1 family.

It localises to the membrane. Merozoite receptor PK66 is a surface antigen involved in parasite invasion of erythrocytes. The chain is Merozoite receptor PK66 (PK66) from Plasmodium knowlesi (strain nuri).